We begin with the raw amino-acid sequence, 504 residues long: Fumitremorgin C monooxygenase (504 aa).

The chain crosses the membrane as a helical span at residues Leu12 to Gly32. Cys442 provides a ligand contact to heme.

It belongs to the cytochrome P450 family. Requires heme as cofactor.

The protein resides in the membrane. The enzyme catalyses fumitremorgin C + 2 reduced [NADPH--hemoprotein reductase] + 2 O2 = 12alpha,13alpha-dihydroxyfumitremorgin C + 2 oxidized [NADPH--hemoprotein reductase] + 2 H2O + 2 H(+). It participates in mycotoxin biosynthesis. Cytochrome P450 monooxygenase; part of the gene cluster that mediates the biosynthesis of fumitremorgins, indole alkaloids that carry not only intriguing chemical structures, but also interesting biological and pharmacological activities. The biosynthesis of fumitremorgin-type alkaloids begins by condensation of the two amino acids L-tryptophan and L-proline to brevianamide F, catalyzed by the non-ribosomal peptide synthetase ftmA. Brevianamide F is then prenylated by the prenyltransferase ftmPT1/ftmB in the presence of dimethylallyl diphosphate, resulting in the formation of tryprostatin B. The three cytochrome P450 monooxygenases, ftmP450-1/ftmC, ftmP450-2/ftmE and ftmP450-3/FtmG, are responsible for the conversion of tryprostatin B to 6-hydroxytryprostatin B, tryprostatin A to fumitremorgin C and fumitremorgin C to 12,13-dihydroxyfumitremorgin C, respectively. The putative methyltransferase ftmMT/ftmD is expected for the conversion of 6-hydroxytryprostatin B to tryprostatin A. FtmPT2/FtmH catalyzes the prenylation of 12,13-dihydroxyfumitre-morgin C in the presence of dimethylallyl diphosphate, resulting in the formation of fumitremorgin B. Fumitremorgin B is further converted to verruculogen by ftmOx1/ftmF via the insertion of an endoperoxide bond between the two prenyl moieties. In some fungal species, verruculogen is further converted to fumitremorgin A, but the enzymes involved in this step have not been identified yet. In Aspergillus fumigatus (Neosartorya fumigata), this protein is Fumitremorgin C monooxygenase.